The following is a 54-amino-acid chain: uncharacterized protein (54 aa).

A helical membrane pass occupies residues 21-43 (SYVVCLYMCGSDCACICVLACVV).

Its subcellular location is the membrane. This is an uncharacterized protein from Saccharomyces cerevisiae (strain ATCC 204508 / S288c) (Baker's yeast).